Reading from the N-terminus, the 2237-residue chain is Activating signal cointegrator 1 complex subunit 3-like (2237 aa).

4 disordered regions span residues 1 to 48, 71 to 118, 242 to 330, and 445 to 472; these read MSEE…RGEM, TIEK…KPID, DEEE…SKLI, and EKTI…DEIK. Basic and acidic residues predominate over residues 24–37; it reads ERNRSELKEPKGEP. Residues 79–97 are compositionally biased toward polar residues; sequence VNSSNDTYSTTKKVKNQNP. Residues 105 to 114 show a composition bias toward low complexity; it reads RKSNGNNNNE. Acidic residues predominate over residues 242 to 282; sequence DEEEEEENLSDFEIRDDDDDDDDVDNNEVDDNNNNDSEAQD. Basic and acidic residues-rich tracts occupy residues 312–325 and 446–460; these read QKPD…DKNN and KTIE…DVEM. Residues 440–468 adopt a coiled-coil conformation; sequence TAATTEKTIEKTESNKKDVEMKQQQQQQQ. The Helicase ATP-binding 1 domain maps to 561 to 745; that stretch reads DCAFKTDNNL…FLRVEPDGVF (185 aa). 574–581 contributes to the ATP binding site; it reads APTSSGKT. A DEAH box motif is present at residues 687 to 690; it reads DEIH. One can recognise a Helicase C-terminal 1 domain in the interval 755 to 990; it reads PLEQQYIGIS…TVRDAVNWLG (236 aa). The SEC63 1 domain maps to 1050-1356; the sequence is STELGKVASH…GAEYSLPISF (307 aa). A Helicase ATP-binding 2 domain is found at 1407 to 1584; the sequence is NCMYQSNDNA…WIGATPQTCY (178 aa). ATP is bound at residue 1420–1427; sequence APTNSGKT. The DEAH box signature appears at 1526–1529; it reads DELH. A Helicase C-terminal 2 domain is found at 1657-1832; the sequence is TLTKPYLVCE…TITKKQDALD (176 aa). The SEC63 2 domain occupies 1892 to 2215; the sequence is PLNLGIIASY…GCDQEHELNI (324 aa).

Belongs to the helicase family.

This Dictyostelium discoideum (Social amoeba) protein is Activating signal cointegrator 1 complex subunit 3-like (ascc3l).